Reading from the N-terminus, the 296-residue chain is Glycine--tRNA ligase alpha subunit (296 aa).

The protein belongs to the class-II aminoacyl-tRNA synthetase family. Tetramer of two alpha and two beta subunits.

It is found in the cytoplasm. The catalysed reaction is tRNA(Gly) + glycine + ATP = glycyl-tRNA(Gly) + AMP + diphosphate. This Listeria monocytogenes serotype 4b (strain CLIP80459) protein is Glycine--tRNA ligase alpha subunit.